The chain runs to 209 residues: Uracil phosphoribosyltransferase (209 aa).

Residues arginine 79, arginine 104, and 131–139 contribute to the 5-phospho-alpha-D-ribose 1-diphosphate site; that span reads DPMLATGAS. Uracil contacts are provided by residues isoleucine 194 and 199–201; that span reads GDA. Aspartate 200 serves as a coordination point for 5-phospho-alpha-D-ribose 1-diphosphate.

It belongs to the UPRTase family. The cofactor is Mg(2+).

It carries out the reaction UMP + diphosphate = 5-phospho-alpha-D-ribose 1-diphosphate + uracil. The protein operates within pyrimidine metabolism; UMP biosynthesis via salvage pathway; UMP from uracil: step 1/1. Allosterically activated by GTP. In terms of biological role, catalyzes the conversion of uracil and 5-phospho-alpha-D-ribose 1-diphosphate (PRPP) to UMP and diphosphate. The protein is Uracil phosphoribosyltransferase of Staphylococcus carnosus (strain TM300).